Here is a 478-residue protein sequence, read N- to C-terminus: tRNA-2-methylthio-N(6)-dimethylallyladenosine synthase (478 aa).

Residues 39 to 157 form the MTTase N-terminal domain; the sequence is KLVFTQTFGC…FPQLLTESIN (119 aa). 6 residues coordinate [4Fe-4S] cluster: C48, C84, C118, C194, C198, and C201. Residues 180–410 form the Radical SAM core domain; that stretch reads RKFELKAFVN…LEAVNRISAE (231 aa). In terms of domain architecture, TRAM spans 410–477; that stretch reads EINDGYKDRI…TFSLNGILVN (68 aa).

Belongs to the methylthiotransferase family. MiaB subfamily. As to quaternary structure, monomer. Requires [4Fe-4S] cluster as cofactor.

It is found in the cytoplasm. The enzyme catalyses N(6)-dimethylallyladenosine(37) in tRNA + (sulfur carrier)-SH + AH2 + 2 S-adenosyl-L-methionine = 2-methylsulfanyl-N(6)-dimethylallyladenosine(37) in tRNA + (sulfur carrier)-H + 5'-deoxyadenosine + L-methionine + A + S-adenosyl-L-homocysteine + 2 H(+). Its function is as follows. Catalyzes the methylthiolation of N6-(dimethylallyl)adenosine (i(6)A), leading to the formation of 2-methylthio-N6-(dimethylallyl)adenosine (ms(2)i(6)A) at position 37 in tRNAs that read codons beginning with uridine. The chain is tRNA-2-methylthio-N(6)-dimethylallyladenosine synthase from Clostridioides difficile (strain 630) (Peptoclostridium difficile).